Here is a 118-residue protein sequence, read N- to C-terminus: Large ribosomal subunit protein uL24c (118 aa).

Belongs to the universal ribosomal protein uL24 family. In terms of assembly, part of the 50S ribosomal subunit.

It localises to the plastid. Its subcellular location is the organellar chromatophore. Its function is as follows. One of two assembly initiator proteins, it binds directly to the 5'-end of the 23S rRNA, where it nucleates assembly of the 50S subunit. This is Large ribosomal subunit protein uL24c (rpl24) from Paulinella chromatophora.